The sequence spans 339 residues: MATKPVVKEKKKLENKKEIYKLIEHNDSSNKNVILEKEEELICPMCGSKNIIKDYERAEIVCETCGCVLQQNLFDVGPEWRAFDHEQRVKRSRVGPPMTYTIHDKGLSTVIDWRNKDSYGKDISADKRAQLYRLRKWQRRIRVSDASERNLAFALSELDRIASKLGLPRNVRENAAVLYRGAVEKGLIRGRSIEGVAAAALYAACRRCKVPRTLDEIAEGSRVDRKEIGRTYRFISRELNIRLTPTNPIDYVPRFASELKLPGEVESKAISILQKANEKGLTSGRGPTGVAAAAIYIASVLHGTRRTQREVADVAGVTEVTIRNRYKELTEHLDIDVTL.

The segment at 39-70 (EELICPMCGSKNIIKDYERAEIVCETCGCVLQ) adopts a TFIIB-type zinc-finger fold. The Zn(2+) site is built by Cys43, Cys46, Cys62, and Cys65. 2 tandem repeats follow at residues 156–239 (SELD…SREL) and 250–331 (DYVP…ELTE).

The protein belongs to the TFIIB family.

Stabilizes TBP binding to an archaeal box-A promoter. Also responsible for recruiting RNA polymerase II to the pre-initiation complex (DNA-TBP-TFIIB). This is Transcription initiation factor IIB from Methanothermococcus thermolithotrophicus (Methanococcus thermolithotrophicus).